Here is a 239-residue protein sequence, read N- to C-terminus: Tetraspanin-9 (239 aa).

Residues 1–13 (MARGCLCCLKYTM) lie on the Cytoplasmic side of the membrane. Residues 14-34 (FLFNLIFWLCGCGLLGVGIWL) traverse the membrane as a helical segment. Over 35–55 (SVSQGNFATFSPSFPSLSAAN) the chain is Extracellular. The chain crosses the membrane as a helical span at residues 56-76 (LVIAIGTIVMVTGFLGCLGAI). At 77–85 (KENKCLLLS) the chain is on the cytoplasmic side. The helical transmembrane segment at 86–106 (FFIVLLIILLAELILIILFFV) threads the bilayer. Residues 107-203 (YMDKVNENAK…VKLWFDDNKH (97 aa)) are Extracellular-facing. Residue Asn-180 is glycosylated (N-linked (GlcNAc...) asparagine). A helical membrane pass occupies residues 204 to 224 (VLGTVGMCILIMQILGMAFSM). Residues 225 to 239 (TLFQHIHRTGKKYDA) lie on the Cytoplasmic side of the membrane.

The protein belongs to the tetraspanin (TM4SF) family. As to quaternary structure, found in a complex with GP6. Glycosylated. In terms of tissue distribution, strongly expressed in megakaryocytes, platelets and lung. Weakly expressed in bone marrow, brain and kidney (at protein level).

The protein localises to the membrane. The chain is Tetraspanin-9 (Tspan9) from Mus musculus (Mouse).